A 346-amino-acid polypeptide reads, in one-letter code: Putative agmatine deiminase (346 aa).

The active-site Amidino-cysteine intermediate is C338.

Belongs to the agmatine deiminase family.

It catalyses the reaction agmatine + H2O = N-carbamoylputrescine + NH4(+). The polypeptide is Putative agmatine deiminase (Streptomyces avermitilis (strain ATCC 31267 / DSM 46492 / JCM 5070 / NBRC 14893 / NCIMB 12804 / NRRL 8165 / MA-4680)).